Reading from the N-terminus, the 451-residue chain is CBL-interacting protein kinase 22 (451 aa).

Residues 26 to 301 (YELGRVLGQG…IGEIFDHPWL (276 aa)) enclose the Protein kinase domain. ATP-binding positions include 32–40 (LGQGASSKV) and K55. D165 (proton acceptor) is an active-site residue. Positions 183-216 (DFGLSAFADADQHLGATDGLAATHCGSPAYVAPE) are activation loop. Positions 330–356 (ELEQAMELNAFDIIGFASGCDLSGLIG) constitute an NAF domain. Positions 361–389 (RVRFVLPGGDSKSVLDKVEKLGREEGLVV) are PPI.

The protein belongs to the protein kinase superfamily. CAMK Ser/Thr protein kinase family. SNF1 subfamily. Requires Mn(2+) as cofactor.

It carries out the reaction L-seryl-[protein] + ATP = O-phospho-L-seryl-[protein] + ADP + H(+). The enzyme catalyses L-threonyl-[protein] + ATP = O-phospho-L-threonyl-[protein] + ADP + H(+). In terms of biological role, CIPK serine-threonine protein kinases interact with CBL proteins. Binding of a CBL protein to the regulatory NAF domain of CIPK protein lead to the activation of the kinase in a calcium-dependent manner. The polypeptide is CBL-interacting protein kinase 22 (CIPK22) (Oryza sativa subsp. japonica (Rice)).